The sequence spans 363 residues: 3-isopropylmalate dehydrogenase A (363 aa).

An NAD(+)-binding site is contributed by Gly-78 to Glu-89. Substrate-binding residues include Arg-96, Arg-106, Arg-135, and Asp-222. 3 residues coordinate Mg(2+): Asp-222, Asp-247, and Asp-251. Gly-287–Asn-299 contacts NAD(+).

Belongs to the isocitrate and isopropylmalate dehydrogenases family. Homodimer. The cofactor is Mg(2+). Requires Mn(2+) as cofactor.

Its subcellular location is the cytoplasm. The catalysed reaction is (2R,3S)-3-isopropylmalate + NAD(+) = 4-methyl-2-oxopentanoate + CO2 + NADH. The protein operates within amino-acid biosynthesis; L-leucine biosynthesis; L-leucine from 3-methyl-2-oxobutanoate: step 3/4. Catalyzes the oxidation of 3-carboxy-2-hydroxy-4-methylpentanoate (3-isopropylmalate) to 3-carboxy-4-methyl-2-oxopentanoate. The product decarboxylates to 4-methyl-2 oxopentanoate. In Aspergillus niger, this protein is 3-isopropylmalate dehydrogenase A (leu2A).